The chain runs to 278 residues: Urease accessory protein UreD (278 aa).

Belongs to the UreD family. As to quaternary structure, ureD, UreF and UreG form a complex that acts as a GTP-hydrolysis-dependent molecular chaperone, activating the urease apoprotein by helping to assemble the nickel containing metallocenter of UreC. The UreE protein probably delivers the nickel.

The protein resides in the cytoplasm. Functionally, required for maturation of urease via the functional incorporation of the urease nickel metallocenter. This chain is Urease accessory protein UreD, found in Escherichia coli.